A 262-amino-acid polypeptide reads, in one-letter code: Glutamate 5-kinase (262 aa).

ATP is bound at residue Lys14. Residues Ser54, Asp141, and Asn153 each contribute to the substrate site. ATP contacts are provided by residues 173–174 and 214–220; these read SD and TGGMVTK.

The protein belongs to the glutamate 5-kinase family.

The protein localises to the cytoplasm. The catalysed reaction is L-glutamate + ATP = L-glutamyl 5-phosphate + ADP. It participates in amino-acid biosynthesis; L-proline biosynthesis; L-glutamate 5-semialdehyde from L-glutamate: step 1/2. Catalyzes the transfer of a phosphate group to glutamate to form L-glutamate 5-phosphate. This is Glutamate 5-kinase from Symbiobacterium thermophilum (strain DSM 24528 / JCM 14929 / IAM 14863 / T).